An 88-amino-acid polypeptide reads, in one-letter code: Eclosion hormone (88 aa).

Residues 1–26 form the signal peptide; sequence MAGKVTVAFFMFAMIAFLANFGYVEC. Intrachain disulfides connect C40–C64, C44–C60, and C47–C75.

This sequence belongs to the insect eclosion hormone family.

The protein localises to the secreted. Neuropeptide that triggers the performance of ecdysis behaviors at the end of a molt. It triggers adult behavior patterns: larval, pupal and adult ecdysis, and plasticization during the molt. The chain is Eclosion hormone from Manduca sexta (Tobacco hawkmoth).